A 351-amino-acid polypeptide reads, in one-letter code: MTVSSSVTAPPDGRMMHARLMNGDRLTQAEAAAFMHEVMEGNVSGVRLAAALAALRVRGETPEEIAGFAQAMRASAVRVQVAPREVLLDVVGTGGDGAHTFNISTTTAFVVAAAGVPVAKHGNRAASSRAGSADVLEALGVNLDAPPQLVADGVNELGIGFMFARNYHPALRHAAPVRADLAARTVFNILGPLANPAGASHLVVGVYRPELTRMLAEVLRLLGAKGATVVYGSGLDEFTVCGPNTVTGLRNGELICRTMHPEECGVSLHPKEAIVGGSPAENAEITRALLTGGGTPAQRDIVALNAGAALRTAEQVESIAQGVARAREVMASGAGWDLLQRYAAHTQRAAS.

5-phospho-alpha-D-ribose 1-diphosphate contacts are provided by residues G92, 95 to 96 (GD), T100, 102 to 105 (NIST), 120 to 128 (KHGNRAASS), and S132. G92 lines the anthranilate pocket. S104 provides a ligand contact to Mg(2+). N123 contributes to the anthranilate binding site. Anthranilate is bound at residue R178. Residues D236 and E237 each coordinate Mg(2+).

Belongs to the anthranilate phosphoribosyltransferase family. Homodimer. The cofactor is Mg(2+).

The catalysed reaction is N-(5-phospho-beta-D-ribosyl)anthranilate + diphosphate = 5-phospho-alpha-D-ribose 1-diphosphate + anthranilate. Its pathway is amino-acid biosynthesis; L-tryptophan biosynthesis; L-tryptophan from chorismate: step 2/5. Functionally, catalyzes the transfer of the phosphoribosyl group of 5-phosphorylribose-1-pyrophosphate (PRPP) to anthranilate to yield N-(5'-phosphoribosyl)-anthranilate (PRA). The sequence is that of Anthranilate phosphoribosyltransferase from Deinococcus geothermalis (strain DSM 11300 / CIP 105573 / AG-3a).